The chain runs to 220 residues: Dual specificity phosphatase 29 (220 aa).

Polar residues predominate over residues 1-15 (MTSGEVKTSLKNAYS). The tract at residues 1 to 29 (MTSGEVKTSLKNAYSSAKRLSPKMEEEGE) is disordered. Positions 54–202 (HVNEVWPKLY…LRELDKQLVQ (149 aa)) constitute a Tyrosine-protein phosphatase domain. A substrate-binding site is contributed by 146 to 153 (HCVMGRSR). The Phosphocysteine intermediate role is filled by cysteine 147.

The protein belongs to the protein-tyrosine phosphatase family. Non-receptor class dual specificity subfamily. As to quaternary structure, homodimer. Interacts with PRKAA2.

Its subcellular location is the cytoplasm. The protein localises to the nucleus. It catalyses the reaction O-phospho-L-tyrosyl-[protein] + H2O = L-tyrosyl-[protein] + phosphate. The enzyme catalyses O-phospho-L-seryl-[protein] + H2O = L-seryl-[protein] + phosphate. The catalysed reaction is O-phospho-L-threonyl-[protein] + H2O = L-threonyl-[protein] + phosphate. In terms of biological role, dual specificity phosphatase able to dephosphorylate phosphotyrosine, phosphoserine and phosphothreonine residues within the same substrate, with a preference for phosphotyrosine as a substrate. Involved in the modulation of intracellular signaling cascades. In skeletal muscle regulates systemic glucose homeostasis by activating, AMPK, an energy sensor protein kinase. Affects MAP kinase signaling though modulation of the MAPK1/2 cascade in skeletal muscle promoting muscle cell differentiation, development and atrophy. The protein is Dual specificity phosphatase 29 of Homo sapiens (Human).